The chain runs to 173 residues: Disulfide bond formation protein B 2 (173 aa).

Over 1–9 (MSLAGSRLL) the chain is Cytoplasmic. A helical transmembrane segment spans residues 10-26 (FSLVFLVGALASWAAFN). At 27-44 (LQTGGGLESCSLWSVQRL) the chain is on the periplasmic side. Residues 45–61 (LLLALGGVNLLAVIQGP) form a helical membrane-spanning segment. At 62-67 (GRVGRA) the chain is on the cytoplasmic side. Residues 68-85 (VYWGLNLLLGLLGVVTAG) traverse the membrane as a helical segment. Residues 86-142 (RHVLLQNIPSEQLLACLPDMSFMLRQLSWWQALKLTFMGTSDCAEVTWTLLDMSLPE) are Periplasmic-facing. C101 and C128 are joined by a disulfide. A helical transmembrane segment spans residues 143-161 (WSLLFFVIMLIFSGYRLWR). Topologically, residues 162–173 (QLRGARKAVALP) are cytoplasmic.

Belongs to the DsbB family.

The protein localises to the cell inner membrane. In terms of biological role, required for disulfide bond formation in some periplasmic proteins. Acts by oxidizing the DsbA protein. The chain is Disulfide bond formation protein B 2 from Pseudomonas fluorescens (strain ATCC BAA-477 / NRRL B-23932 / Pf-5).